Here is a 493-residue protein sequence, read N- to C-terminus: Aspartyl/glutamyl-tRNA(Asn/Gln) amidotransferase subunit B (493 aa).

Residues 268 to 291 are disordered; that stretch reads HYQEADGSTSKGRPKETAEDYRYF. Residues 280–291 show a composition bias toward basic and acidic residues; that stretch reads RPKETAEDYRYF.

The protein belongs to the GatB/GatE family. GatB subfamily. Heterotrimer of A, B and C subunits.

The enzyme catalyses L-glutamyl-tRNA(Gln) + L-glutamine + ATP + H2O = L-glutaminyl-tRNA(Gln) + L-glutamate + ADP + phosphate + H(+). It catalyses the reaction L-aspartyl-tRNA(Asn) + L-glutamine + ATP + H2O = L-asparaginyl-tRNA(Asn) + L-glutamate + ADP + phosphate + 2 H(+). Allows the formation of correctly charged Asn-tRNA(Asn) or Gln-tRNA(Gln) through the transamidation of misacylated Asp-tRNA(Asn) or Glu-tRNA(Gln) in organisms which lack either or both of asparaginyl-tRNA or glutaminyl-tRNA synthetases. The reaction takes place in the presence of glutamine and ATP through an activated phospho-Asp-tRNA(Asn) or phospho-Glu-tRNA(Gln). The chain is Aspartyl/glutamyl-tRNA(Asn/Gln) amidotransferase subunit B from Corynebacterium glutamicum (strain ATCC 13032 / DSM 20300 / JCM 1318 / BCRC 11384 / CCUG 27702 / LMG 3730 / NBRC 12168 / NCIMB 10025 / NRRL B-2784 / 534).